The following is a 345-amino-acid chain: Phosphoribosylformylglycinamidine cyclo-ligase (345 aa).

The protein belongs to the AIR synthase family.

Its subcellular location is the cytoplasm. The catalysed reaction is 2-formamido-N(1)-(5-O-phospho-beta-D-ribosyl)acetamidine + ATP = 5-amino-1-(5-phospho-beta-D-ribosyl)imidazole + ADP + phosphate + H(+). It participates in purine metabolism; IMP biosynthesis via de novo pathway; 5-amino-1-(5-phospho-D-ribosyl)imidazole from N(2)-formyl-N(1)-(5-phospho-D-ribosyl)glycinamide: step 2/2. This Pasteurella multocida (strain Pm70) protein is Phosphoribosylformylglycinamidine cyclo-ligase.